The sequence spans 1558 residues: ABC transporter NFT1 (1558 aa).

Residues 1 to 29 lie on the Extracellular side of the membrane; sequence MIKNGTCPYWERDDLSECARREYIEFKFP. A glycan (N-linked (GlcNAc...) asparagine) is linked at asparagine 4. A helical transmembrane segment spans residues 30–50; sequence LFILLTGMIYAFCKVFRAFYL. Residues 51–103 are Cytoplasmic-facing; that stretch reads RGKNHTNEAPEFEEQGNGNHEYARFSVLRLKSAWESRSFCNVNNRSTFDKFKK. Residues 104–124 traverse the membrane as a helical segment; it reads FIEGAFIVLQLTIHLYILSSM. Residues 125–130 lie on the Extracellular side of the membrane; sequence PMDNKK. The helical transmembrane segment at 131–151 threads the bilayer; the sequence is FFHQGFLVQMFLWILLLVVIT. Over 152–169 the chain is Cytoplasmic; it reads LRLISASQSFRWVLACKR. The chain crosses the membrane as a helical span at residues 170 to 190; the sequence is DLWAVSFYSYASLFTLSILPL. The Extracellular portion of the chain corresponds to 191–201; it reads RSVFIGKIKDK. Residues 202–222 form a helical membrane-spanning segment; sequence IMVKYIISETFIDLALLLLLS. Over 223-302 the chain is Cytoplasmic; that stretch reads TSSIEGTRYS…SSKKGRLLPN (80 aa). The chain crosses the membrane as a helical span at residues 303–323; that stretch reads IICYFKAVFISQLFLAFVSSF. Positions 311–621 constitute an ABC transmembrane type-1 1 domain; that stretch reads FISQLFLAFV…IASTVSLLIQ (311 aa). The Extracellular portion of the chain corresponds to 324-351; the sequence is LNFVPSLLMPRILSYVNDPKSKSWNLVS. The helical transmembrane segment at 352–374 threads the bilayer; the sequence is LYVSSMLVSKIIATTCRGQGLFL. Residues 375–449 are Cytoplasmic-facing; sequence GEKGTMQLRT…VMSIDAFKVS (75 aa). Residues 410–434 form a disordered region; sequence NASTSFEENPDSSEAEPRKKSSRKD. A compositionally biased stretch (basic and acidic residues) spans 424-434; the sequence is AEPRKKSSRKD. The helical transmembrane segment at 450 to 470 threads the bilayer; sequence EAMNTFYLACEAVFMTVTALM. Topologically, residues 471 to 481 are extracellular; the sequence is ILYSLLGWSAF. A helical transmembrane segment spans residues 482-504; sequence AGTFALLAMIPLNFWCATFYGNY. At 505–558 the chain is on the cytoplasmic side; that stretch reads QADQLILTDKRTSGISEALNSIRVIKLLAWENLFYQKIINVRDGEIRLLKKKAT. The chain crosses the membrane as a helical span at residues 559-579; that stretch reads IFFLNHLIWFFGPTLVSAITF. Topologically, residues 580–584 are extracellular; it reads SVFIK. A helical transmembrane segment spans residues 585–605; the sequence is FQNQTLTPTIAFTALSLFAIL. Residues 606–953 lie on the Cytoplasmic side of the membrane; that stretch reads RTPMDQIAST…KFSAYKWLAD (348 aa). Residues 651 to 892 enclose the ABC transporter 1 domain; that stretch reads FGFEDASMEW…NEFLRESINN (242 aa). 686 to 693 serves as a coordination point for ATP; it reads GPTGSGKS. The segment covering 892 to 901 has biased composition (polar residues); sequence NDSKNTTHNQ. The disordered stretch occupies residues 892-926; sequence NDSKNTTHNQIDLKRSTTSKKTKNGDPEGGNSQDE. The chain crosses the membrane as a helical span at residues 954 to 974; it reads YFGGLGVVFVFTSSSILIHGI. Residues 961-1251 enclose the ABC transmembrane type-1 2 domain; sequence VFVFTSSSIL…IIKVFSSVEL (291 aa). Topologically, residues 975-1013 are extracellular; the sequence is TLSQGFWLRYWLDTGSSGSKSTWLYRIVEGHSNIYFLLT. A helical membrane pass occupies residues 1014-1034; that stretch reads YIIIGLVSSFLTSGKVWIAII. Over 1035-1082 the chain is Cytoplasmic; sequence SGTNVTKKIFAKLLSSILYAKLRFHNVTPTGRIMNRFSKDMDIIDQQL. The chain crosses the membrane as a helical span at residues 1083 to 1105; the sequence is IPNFEGLSYSVVVCLWIILLIGY. At 1106 to 1109 the chain is on the extracellular side; sequence VTPQ. The helical transmembrane segment at 1110–1132 threads the bilayer; the sequence is FLLFAIPLCALYYTVCTLYLRAS. Topologically, residues 1133 to 1199 are cytoplasmic; that stretch reads RELKRIDNIN…ATEWITYRVD (67 aa). The chain crosses the membrane as a helical span at residues 1200–1220; sequence IIGTLVLFSSSVMIIMKASYL. Topologically, residues 1221-1222 are extracellular; it reads DA. A helical transmembrane segment spans residues 1223–1243; it reads GLAGILLSNAFSFTETAQWII. The Cytoplasmic segment spans residues 1244–1558; sequence KVFSSVELLM…LAKVSFDNKR (315 aa). Residues 1285 to 1538 form the ABC transporter 2 domain; sequence VELKNLSLRY…RNTIFYRLCR (254 aa). Residue 1319–1326 coordinates ATP; it reads GRTGAGKS.

This sequence belongs to the ABC transporter superfamily. ABCC family. Conjugate transporter (TC 3.A.1.208) subfamily.

It is found in the membrane. This chain is ABC transporter NFT1 (NFT1), found in Saccharomyces cerevisiae (Baker's yeast).